Here is a 672-residue protein sequence, read N- to C-terminus: SHC SH2 domain-binding protein 1 (672 aa).

Residue Ala2 is modified to N-acetylalanine. The residue at position 5 (Ser5) is a Phosphoserine. Thr7 bears the Phosphothreonine mark. Phosphoserine occurs at positions 31, 42, 44, 47, and 273. PbH1 repeat units follow at residues Gly428–His451, Arg452–Thr473, Ser474–Pro496, Gly497–Asp518, and Ile526–Lys548. Ser634 carries the post-translational modification Phosphoserine.

Interacts directly with isoform p52shc of SHC1 via its SH2 domain. Interacts with TRIM71; leading to enhanced SHCBP1 protein stability. Interacts with both members of the centralspindlin complex, KIF23 and RACGAP1.

It is found in the midbody. The protein resides in the cytoplasm. The protein localises to the cytoskeleton. It localises to the spindle. In terms of biological role, may play a role in signaling pathways governing cellular proliferation, cell growth and differentiation. May be a component of a novel signaling pathway downstream of Shc. Acts as a positive regulator of FGF signaling in neural progenitor cells. This Homo sapiens (Human) protein is SHC SH2 domain-binding protein 1 (SHCBP1).